The following is a 295-amino-acid chain: NAD kinase (295 aa).

D72 (proton acceptor) is an active-site residue. NAD(+) contacts are provided by residues 72-73, 146-147, R157, K174, D176, 187-192, and Q247; these read DG, ND, and TAYALS.

The protein belongs to the NAD kinase family. Requires a divalent metal cation as cofactor.

The protein localises to the cytoplasm. It catalyses the reaction NAD(+) + ATP = ADP + NADP(+) + H(+). Its function is as follows. Involved in the regulation of the intracellular balance of NAD and NADP, and is a key enzyme in the biosynthesis of NADP. Catalyzes specifically the phosphorylation on 2'-hydroxyl of the adenosine moiety of NAD to yield NADP. This is NAD kinase from Azotobacter vinelandii (strain DJ / ATCC BAA-1303).